The chain runs to 85 residues: Beta-insect depressant toxin Lqh-dprIT3f (85 aa).

The signal sequence occupies residues 1 to 21; that stretch reads MKLLLLLTISASMLIEGLVNA. One can recognise an LCN-type CS-alpha/beta domain in the interval 22–82; it reads DGYIRGGDGC…EWDYETDTCG (61 aa). 4 disulfide bridges follow: Cys-31/Cys-81, Cys-35/Cys-56, Cys-42/Cys-63, and Cys-46/Cys-65. Glycine amide is present on Gly-82.

This sequence belongs to the long (4 C-C) scorpion toxin superfamily. Sodium channel inhibitor family. Beta subfamily. As to expression, expressed by the venom gland.

The protein localises to the secreted. In terms of biological role, depressant insect beta-toxins cause a transient contraction paralysis followed by a slow flaccid paralysis. They bind voltage-independently at site-4 of sodium channels (Nav) and block action potentials, primarily by depolarizing the axonal membrane and suppressing the sodium current. This depressant toxin is active only on insects. It is found in a relatively small amount in the venom. This is Beta-insect depressant toxin Lqh-dprIT3f from Leiurus hebraeus (Hebrew deathstalker scorpion).